Here is a 424-residue protein sequence, read N- to C-terminus: tRNA(Met) cytidine acetate ligase (424 aa).

Residues 7–20 (ITEY…HLHH), G102, N174, and R199 contribute to the ATP site.

The protein belongs to the TmcAL family.

Its subcellular location is the cytoplasm. It carries out the reaction cytidine(34) in elongator tRNA(Met) + acetate + ATP = N(4)-acetylcytidine(34) in elongator tRNA(Met) + AMP + diphosphate. Catalyzes the formation of N(4)-acetylcytidine (ac(4)C) at the wobble position of elongator tRNA(Met), using acetate and ATP as substrates. First activates an acetate ion to form acetyladenylate (Ac-AMP) and then transfers the acetyl group to tRNA to form ac(4)C34. The chain is tRNA(Met) cytidine acetate ligase from Alkaliphilus metalliredigens (strain QYMF).